The chain runs to 354 residues: Clavesin-1 (354 aa).

In terms of domain architecture, CRAL-TRIO spans 118 to 279; sequence IKRALIDGFP…EFGGTLPPYD (162 aa). The interval 317–354 is disordered; that stretch reads RECSPKPMKRSQSVVEAGTLKHEEKGENENTQPLLALD. Residues 335-344 are compositionally biased toward basic and acidic residues; that stretch reads TLKHEEKGEN. A compositionally biased stretch (polar residues) spans 345–354; it reads ENTQPLLALD.

In terms of assembly, forms a complex with clathrin heavy chain and gamma-adaptin.

It localises to the golgi apparatus. The protein localises to the trans-Golgi network membrane. Its subcellular location is the early endosome membrane. The protein resides in the cytoplasmic vesicle. It is found in the clathrin-coated vesicle. Its function is as follows. Required for normal morphology of late endosomes and/or lysosomes in neurons. Binds phosphatidylinositol 3,5-bisphosphate (PtdIns(3,5)P2). The polypeptide is Clavesin-1 (Clvs1) (Mus musculus (Mouse)).